Reading from the N-terminus, the 441-residue chain is ATP-dependent RNA helicase SUB2 (441 aa).

Positions 1-17 (MSHEGEEELLDYSDSEE) are enriched in acidic residues. The tract at residues 1–47 (MSHEGEEELLDYSDSEEIALPSTTVESGSNGDAKAETTTVKEENTEQ) is disordered. Residues 21–30 (PSTTVESGSN) are compositionally biased toward polar residues. Positions 33-46 (AKAETTTVKEENTE) are enriched in basic and acidic residues. The Q motif signature appears at 57-85 (TGFRDFLLKPELLRAIVDCGFEHPSEVQQ). The region spanning 88 to 263 (IPQSILGTDV…KKFMSSPLEI (176 aa)) is the Helicase ATP-binding domain. 101-108 (AKAGVGKT) contacts ATP. Positions 210 to 213 (DECD) match the DECD box motif. The 162-residue stretch at 275–436 (GLQQYYVDVE…PYPAEGVDPS (162 aa)) folds into the Helicase C-terminal domain.

Belongs to the DEAD box helicase family. DECD subfamily.

It localises to the nucleus. It catalyses the reaction ATP + H2O = ADP + phosphate + H(+). In terms of biological role, ATP-binding RNA helicase involved in transcription elongation and required for the export of mRNA out of the nucleus. SUB2 also plays a role in pre-mRNA splicing and spliceosome assembly. May be involved in rDNA and telomeric silencing, and maintenance of genome integrity. The polypeptide is ATP-dependent RNA helicase SUB2 (SUB2) (Yarrowia lipolytica (strain CLIB 122 / E 150) (Yeast)).